The following is a 210-amino-acid chain: Adenylate kinase (210 aa).

10–15 (GSGKGT) contributes to the ATP binding site. Residues 28-57 (SVGKVLRTVMESNTAEADVVKKFIKSGKLV) are NMP. Residues R34, 55–57 (KLV), 83–86 (GYPR), and Q90 contribute to the AMP site. The tract at residues 120–158 (GRISCTDCGTIYNKLYCMPKINGVCDICNSSSFQNRVDD) is LID. R121 is a binding site for ATP. Positions 124 and 127 each coordinate Zn(2+). Residue 130 to 131 (IY) coordinates ATP. Residues C144 and C147 each coordinate Zn(2+). Residues R155 and R166 each coordinate AMP. Q194 provides a ligand contact to ATP.

The protein belongs to the adenylate kinase family. As to quaternary structure, monomer.

The protein resides in the cytoplasm. It carries out the reaction AMP + ATP = 2 ADP. It participates in purine metabolism; AMP biosynthesis via salvage pathway; AMP from ADP: step 1/1. Its function is as follows. Catalyzes the reversible transfer of the terminal phosphate group between ATP and AMP. Plays an important role in cellular energy homeostasis and in adenine nucleotide metabolism. The sequence is that of Adenylate kinase from Orientia tsutsugamushi (strain Boryong) (Rickettsia tsutsugamushi).